Consider the following 389-residue polypeptide: Cuticlin-3 (389 aa).

Positions 1 to 19 (MARYSLGLGLCLLVASVSA) are cleaved as a signal peptide. Over 20–354 (IPVDNNVEGE…ELCISSFHIS (335 aa)) the chain is Extracellular. Positions 33–278 (ECGPTSITVN…PTCSEPQGFG (246 aa)) constitute a ZP domain. A glycan (N-linked (GlcNAc...) asparagine) is linked at asparagine 284. A helical transmembrane segment spans residues 355 to 375 (VVTVFLGLTVFVAIFITYMIV). Over 376 to 389 (SRMMVPSDKMQSAC) the chain is Cytoplasmic.

The protein localises to the cell membrane. In terms of biological role, plays a role in alae formation in L1 larvae. This Caenorhabditis elegans protein is Cuticlin-3.